Reading from the N-terminus, the 254-residue chain is Transmembrane protein 70, mitochondrial (254 aa).

Residues Met1–Cys78 constitute a mitochondrion transit peptide. Residues Ser79–Ser112 are Mitochondrial matrix-facing. Residues Leu113 to Leu133 form a helical membrane-spanning segment. Residues Pro134–Gln136 are Mitochondrial intermembrane-facing. The helical transmembrane segment at Ile137–Leu157 threads the bilayer. Residues Thr158 to Lys254 are Mitochondrial matrix-facing.

Belongs to the TMEM70 family. In terms of assembly, homooligomer. Interacts (homooligomer form) with ATP5MC1; this interaction facilitates the oligomer formation of subunit c/ATP5MC1 (c-ring) and the c-ring membrane insertion and also protects ATP5MC1 against intramitochondrial proteolysis. Interacts with the core subunits TMEM126B, NDUFAF1, ECSIT and ACAD9 of the MCIA complex. Interacts with ATP5MC3, TMEM242 and TIMMDC1.

It is found in the mitochondrion inner membrane. In terms of biological role, scaffold protein that participates in the c-ring assembly of mitochondrial ATP synthase (F(1)F(0) ATP synthase or complex V) by facilitating the membrane insertion and oligomer formation of the subunit c/ATP5MC1 through its interaction. Therefore, participates in the early stage of mitochondrial ATP synthase biogenesis and also protects subunit c/ATP5MC1 against intramitochondrial proteolysis. In addition, binds the mitochondrial proton-transporting ATP synthase complexes I and may play a role in the stability of its membrane-bound subassemblies. The sequence is that of Transmembrane protein 70, mitochondrial from Bos taurus (Bovine).